Here is a 289-residue protein sequence, read N- to C-terminus: Ribosomal protein L11 methyltransferase (289 aa).

Positions 142, 163, 185, and 226 each coordinate S-adenosyl-L-methionine.

It belongs to the methyltransferase superfamily. PrmA family.

The protein localises to the cytoplasm. The catalysed reaction is L-lysyl-[protein] + 3 S-adenosyl-L-methionine = N(6),N(6),N(6)-trimethyl-L-lysyl-[protein] + 3 S-adenosyl-L-homocysteine + 3 H(+). In terms of biological role, methylates ribosomal protein L11. This chain is Ribosomal protein L11 methyltransferase, found in Legionella pneumophila subsp. pneumophila (strain Philadelphia 1 / ATCC 33152 / DSM 7513).